Consider the following 676-residue polypeptide: Phosphatidylinositol-3,5-bisphosphate 3-phosphatase MTMR6 (676 aa).

The 377-residue stretch at 125–501 (GWRRLDWNSE…ARFTVWTAMY (377 aa)) folds into the Myotubularin phosphatase domain. Asn-249, Asn-274, and Ile-275 together coordinate a 1,2-diacyl-sn-glycero-3-phospho-(1D-myo-inositol-3,5-bisphosphate). A 1,2-diacyl-sn-glycero-3-phospho-(1D-myo-inositol-3-phosphate) contacts are provided by Asn-249, Asn-274, and Ile-275. Substrate is bound by residues 249-252 (NKVQ), 274-275 (NI), and 335-341 (CSDGWDR). The active-site Phosphocysteine intermediate is the Cys-335. Ser-336, Asp-337, Gly-338, Trp-339, Asp-340, Arg-341, Lys-377, and Arg-381 together coordinate a 1,2-diacyl-sn-glycero-3-phospho-(1D-myo-inositol-3,5-bisphosphate). A 1,2-diacyl-sn-glycero-3-phospho-(1D-myo-inositol-3-phosphate)-binding residues include Ser-336, Asp-337, Gly-338, Trp-339, Asp-340, and Arg-341. Position 381 (Arg-381) interacts with a 1,2-diacyl-sn-glycero-3-phospho-(1D-myo-inositol-3-phosphate). Position 381 (Arg-381) interacts with substrate. The FYVE-type zinc-finger motif lies at 618 to 675 (KWQPLRGADRCSNPACRGEFSSTIERRIHCHLCGMIFCRRCLKVSADERERVCDKCKT).

The protein belongs to the protein-tyrosine phosphatase family. Non-receptor class myotubularin subfamily. In terms of assembly, heterodimer with mtm-9. In terms of tissue distribution, expressed in intestinal cells. Expressed in head neurons, pre-anal ganglion, hypodermal cells, anal depressor muscle and non-neuronal cells in the tail.

The protein resides in the cytoplasm. It is found in the membrane. Its subcellular location is the apical cell membrane. It carries out the reaction a 1,2-diacyl-sn-glycero-3-phospho-(1D-myo-inositol-3,5-bisphosphate) + H2O = a 1,2-diacyl-sn-glycero-3-phospho-(1D-myo-inositol-5-phosphate) + phosphate. The enzyme catalyses a 1,2-diacyl-sn-glycero-3-phospho-(1D-myo-inositol-3-phosphate) + H2O = a 1,2-diacyl-sn-glycero-3-phospho-(1D-myo-inositol) + phosphate. It catalyses the reaction 1,2-dioctanoyl-sn-glycero-3-phospho-(1D-myo-inositol-3,5-bisphosphate) + H2O = 1,2-dioctanoyl-sn-glycero-3-phospho-(1D-myo-inositol-5-phosphate) + phosphate. The catalysed reaction is 1,2-dioctanoyl-sn-glycero-3-phospho-(1-D-myo-inositol-3-phosphate) + H2O = 1,2-dioctanoyl-sn-glycero-3-phospho-(1D-myo-inositol) + phosphate. In terms of biological role, probable lipid phosphatase that specifically dephosphorylates the D-3 position of phosphatidylinositol 3-phosphate and phosphatidylinositol 3,5-bisphosphate, generating phosphatidylinositol and phosphatidylinositol 5-phosphate. In association with mtm-9, plays a role in endosome trafficking probably by regulating phosphatidylinositol-3-phosphate levels. Regulates fluid phase endocytosis in coelomocytes. Controls the endosomal localization of sorting nexin snx-3 and the levels of sorting receptor mig-14. By regulating the retrograde transport of mig-14, may be involved in the secretion of Wnt ligands such as egl-20. Regulates posterior migration of QL neuroblast descendants and the anterior migration of QR neuroblast descendants and HSN neurons during larval development. Involved in the formation of correct synapse number in DA9 motor neurons probably in part by regulating the secretion of Wnt ligand egl-20. The protein is Phosphatidylinositol-3,5-bisphosphate 3-phosphatase MTMR6 of Caenorhabditis elegans.